We begin with the raw amino-acid sequence, 182 residues long: Interferon gamma 1 (182 aa).

The first 21 residues, 1–21 (MIAQNMTIFFWGVCLLTSGWA), serve as a signal peptide directing secretion. N-linked (GlcNAc...) asparagine glycosylation occurs at N93.

This sequence belongs to the type II (or gamma) interferon family. In terms of assembly, homodimer. As to expression, highly expressed in spleen. Also detected at lower levels in brain, gill, kidney, heart, intestine and muscle. In immune cell populations, has highest expression in peripheral blood leukocytes and splenocytes. Detected in kidney-derived monocytes, neutrophils, macrophages and leukocytes.

It localises to the secreted. Functionally, cytokine which binds to interferon gamma receptor 1-like (ifngr1l). Has activating effects on primary macrophages and neutrophils. Induces nitric oxide production and phagocytic responses in macrophages. Primes macrophages and neutrophils for production of reactive oxygen intermediates (ROI). Stimulates phosphorylation and nuclear localization of the JAK/STAT signal transducer stat1. Promotes increased expression of a number of genes important for macrophage activity, including the interferon regulatory factors irf1, irf2, irf8 and irf9. The chain is Interferon gamma 1 from Carassius auratus (Goldfish).